A 131-amino-acid polypeptide reads, in one-letter code: Small ribosomal subunit protein uS8 (131 aa).

This sequence belongs to the universal ribosomal protein uS8 family. As to quaternary structure, part of the 30S ribosomal subunit. Contacts proteins S5 and S12.

Its function is as follows. One of the primary rRNA binding proteins, it binds directly to 16S rRNA central domain where it helps coordinate assembly of the platform of the 30S subunit. The chain is Small ribosomal subunit protein uS8 from Acinetobacter baylyi (strain ATCC 33305 / BD413 / ADP1).